The primary structure comprises 308 residues: Oxygen-dependent coproporphyrinogen-III oxidase (308 aa).

Ser-94 is a substrate binding site. His-98 and His-108 together coordinate a divalent metal cation. His-108 acts as the Proton donor in catalysis. Substrate is bound at residue 110 to 112; the sequence is NVR. Residues His-147 and His-177 each coordinate a divalent metal cation. The segment at 242–277 is important for dimerization; it reads YVEFNLVWDRGTLFGLQTGGRTESILMSMPPLVRWE. 260–262 contributes to the substrate binding site; sequence GGR.

This sequence belongs to the aerobic coproporphyrinogen-III oxidase family. Homodimer. Requires a divalent metal cation as cofactor.

Its subcellular location is the cytoplasm. The catalysed reaction is coproporphyrinogen III + O2 + 2 H(+) = protoporphyrinogen IX + 2 CO2 + 2 H2O. The protein operates within porphyrin-containing compound metabolism; protoporphyrin-IX biosynthesis; protoporphyrinogen-IX from coproporphyrinogen-III (O2 route): step 1/1. Its function is as follows. Involved in the heme biosynthesis. Catalyzes the aerobic oxidative decarboxylation of propionate groups of rings A and B of coproporphyrinogen-III to yield the vinyl groups in protoporphyrinogen-IX. The polypeptide is Oxygen-dependent coproporphyrinogen-III oxidase (Yersinia enterocolitica serotype O:8 / biotype 1B (strain NCTC 13174 / 8081)).